The primary structure comprises 397 residues: Probable transport protein MmpL6 (397 aa).

Helical transmembrane passes span 190–210, 214–234, 242–262, 293–313, and 328–348; these read YDLLIAGIAALSLILLIMMII, LVAALVIVGTVALSLGASFGL, LLGIQLYWIVLALAVILLLAV, TGGVVTAAGLVFAATMSSFVF, and LGLLFDTLVVRAFMTPSIAVL.

The protein belongs to the resistance-nodulation-cell division (RND) (TC 2.A.6) family. MmpL subfamily.

The protein resides in the cell membrane. This is Probable transport protein MmpL6 (mmpL6) from Mycobacterium tuberculosis (strain CDC 1551 / Oshkosh).